Reading from the N-terminus, the 1091-residue chain is Error-prone DNA polymerase (1091 aa).

Residues 1 to 51 (MGWSNGPPSWAEMERVLNGKPRHAGVPAFDADGDVPRSRKRGAYQPPGRER) form a disordered region.

This sequence belongs to the DNA polymerase type-C family. DnaE2 subfamily.

It localises to the cytoplasm. It catalyses the reaction DNA(n) + a 2'-deoxyribonucleoside 5'-triphosphate = DNA(n+1) + diphosphate. Its function is as follows. DNA polymerase involved in damage-induced mutagenesis and translesion synthesis (TLS). It is not the major replicative DNA polymerase. The polypeptide is Error-prone DNA polymerase (Mycobacterium bovis (strain ATCC BAA-935 / AF2122/97)).